Here is a 355-residue protein sequence, read N- to C-terminus: Replication-associated protein (355 aa).

The CRESS-DNA virus Rep endonuclease domain occupies 11 to 114 (SHRNANTFLT…PLAVFERGTF (104 aa)). Positions 18 to 21 (FLTY) match the RCR-1 motif. Residues Glu52, His60, and His62 each contribute to the a divalent metal cation site. The RCR-2 motif lies at 60–62 (HLH). Tyr100 serves as the catalytic For DNA cleavage activity. The short motif at 100–103 (YILK) is the RCR-3 element. Glu104 is an a divalent metal cation binding site. An oligomerization region spans residues 175 to 187 (SANKLFPEIQEEF). 229-236 (GPTRTGKS) is an ATP binding site. The segment at 252 to 270 (VDWSSYNEDAIYNIVDDIP) is transactivation. The short motif at 292–303 (KYGKKKKVQKKS) is the Nuclear localization signal element.

Belongs to the geminiviridae Rep protein family. As to quaternary structure, homooligomer. Rep binds to repeated DNA motifs (iterons). Forms the O-complex, which is a Rep-DNA complex involved in the initiation of RCR. Part of the C- and V-complexes which are RepA-Rep-DNA complexes involved in the c-sense and v-sense transcription. Mg(2+) serves as cofactor. Mn(2+) is required as a cofactor.

It localises to the host nucleus. Functionally, essential for the replication of viral ssDNA. The closed circular ssDNA genome is first converted to a superhelical dsDNA. Rep binds a specific region at the genome origin of replication. It introduces an endonucleolytic nick within the conserved sequence 5'-TAATATTAC-3' in the intergenic region of the genome present in all geminiviruses, thereby initiating the rolling circle replication (RCR). Following cleavage, binds covalently to the 5'-phosphate of DNA as a tyrosyl ester. The cleavage gives rise to a free 3'-OH that serves as a primer for the cellular DNA polymerase. The polymerase synthesizes the (+) strand DNA by rolling circle mechanism. After one round of replication, a Rep-catalyzed nucleotidyl transfer reaction releases a circular single-stranded virus genome, thereby terminating the replication. Displays origin-specific DNA cleavage, nucleotidyl transferase, ATPase and helicase activities. Acts as an inhibitor of C-sense gene transcription. The protein is Replication-associated protein of Maize streak virus genotype A (isolate South Africa) (MSV).